We begin with the raw amino-acid sequence, 478 residues long: Multidrug resistance outer membrane protein MdtQ (478 aa).

An N-terminal signal peptide occupies residues 1–21 (MNRDSFYPAIACFPLLLMLAG). Residue cysteine 22 is the site of N-palmitoyl cysteine attachment. Cysteine 22 is lipidated: S-diacylglycerol cysteine.

This sequence belongs to the outer membrane factor (OMF) (TC 1.B.17) family.

It is found in the cell outer membrane. In terms of biological role, could be involved in resistance to puromycin, acriflavine and tetraphenylarsonium chloride. In Escherichia coli O157:H7, this protein is Multidrug resistance outer membrane protein MdtQ (mdtQ).